Consider the following 473-residue polypeptide: Photosystem II CP43 reaction center protein (473 aa).

A propeptide spanning residues 1-14 is cleaved from the precursor; it reads MKTLYSLRRFYPVE. At Thr15 the chain carries N-acetylthreonine. A Phosphothreonine modification is found at Thr15. 5 consecutive transmembrane segments (helical) span residues 69–93, 134–155, 178–200, 255–275, and 291–312; these read LFEV…PHLA, LLGP…KDRN, KALY…RKIT, KPFA…LSYS, and WFNN…ASQA. Residue Glu367 coordinates [CaMn4O5] cluster. The chain crosses the membrane as a helical span at residues 447–471; that stretch reads RARAAAAGFEKGIDRDFEPVLSMTP.

This sequence belongs to the PsbB/PsbC family. PsbC subfamily. As to quaternary structure, PSII is composed of 1 copy each of membrane proteins PsbA, PsbB, PsbC, PsbD, PsbE, PsbF, PsbH, PsbI, PsbJ, PsbK, PsbL, PsbM, PsbT, PsbX, PsbY, PsbZ, Psb30/Ycf12, at least 3 peripheral proteins of the oxygen-evolving complex and a large number of cofactors. It forms dimeric complexes. It depends on Binds multiple chlorophylls and provides some of the ligands for the Ca-4Mn-5O cluster of the oxygen-evolving complex. It may also provide a ligand for a Cl- that is required for oxygen evolution. PSII binds additional chlorophylls, carotenoids and specific lipids. as a cofactor.

The protein localises to the plastid. It localises to the chloroplast thylakoid membrane. Functionally, one of the components of the core complex of photosystem II (PSII). It binds chlorophyll and helps catalyze the primary light-induced photochemical processes of PSII. PSII is a light-driven water:plastoquinone oxidoreductase, using light energy to abstract electrons from H(2)O, generating O(2) and a proton gradient subsequently used for ATP formation. This is Photosystem II CP43 reaction center protein from Amborella trichopoda.